Reading from the N-terminus, the 21-residue chain is Thylakoid lumenal 13.8 kDa protein (21 aa).

It localises to the plastid. Its subcellular location is the chloroplast thylakoid lumen. The sequence is that of Thylakoid lumenal 13.8 kDa protein from Spinacia oleracea (Spinach).